Consider the following 631-residue polypeptide: MPEISLRHVVSCSSQDSTHRAENLLKADTYRKWRSAKAGEKTISVVLQLEKEEQIHSVDIGNDGSAFVEVLVGSSAGGATAGEQDYEVLLVTSSFMSPSESRSGSNPNRVRIFGPDKLVRAAAEKRWDRVKIVCSQPYSKDSPYGLSFVKFHSPPDKDEAEAPSQKVTVTKLGQFRVKEEDDSANSLRPGALFFNRINKAASASASDPAGPSYAAATLQASSAASSASPVPKVGGSSSKLQEPPKGKRKLDLGLEDKKPPSKPSAGPPAPKRPKLPVPSRTPAATPASTPAQKAVPGKPRGEGTEPRGARAGPQELGKILQGVVVVLSGFQNPFRSELRDKALELGAKYRPDWTPDSTHLICAFANTPKYSQVLGLGGRIVRKEWVLDCYRMRRRLPSRRYLMAGLGSSSEDEGDSHSESGEDEAPKLPRKRPQPKAKTQAAGPSSPPRPPTPEETKAPSPGPQDNSDTDGEQSEGRDNGAEDSGDTEDELRRVAKQREQRQPPAPEENGEDPYAGSTDENTDSEAPSEADLPIPELPDFFQGKHFFLYGEFPGDERRKLIRYVTAFNGELEDYMSDRVQFVITAQEWDPNFEEALMENPSLAFVRPRWIYSCNEKQKLLPHQLYGVVPQA.

Serine 142 carries the phosphoserine modification. Residue lysine 178 forms a Glycyl lysine isopeptide (Lys-Gly) (interchain with G-Cter in SUMO1); alternate linkage. Lysine 178 is covalently cross-linked (Glycyl lysine isopeptide (Lys-Gly) (interchain with G-Cter in SUMO2); alternate). Serine 206 and serine 228 each carry phosphoserine. The interval 225 to 314 (SSASPVPKVG…EPRGARAGPQ (90 aa)) is disordered. The segment covering 242 to 259 (EPPKGKRKLDLGLEDKKP) has biased composition (basic and acidic residues). At serine 261 the chain carries Phosphoserine. Over residues 261 to 270 (SKPSAGPPAP) the composition is skewed to pro residues. Residues 277 to 291 (VPSRTPAATPASTPA) show a composition bias toward low complexity. At threonine 281 the chain carries Phosphothreonine. The span at 299-308 (PRGEGTEPRG) shows a compositional bias: basic and acidic residues. In terms of domain architecture, BRCT 1 spans 315–403 (ELGKILQGVV…RRLPSRRYLM (89 aa)). Serine 371 is modified (phosphoserine; by PRKDC). A disordered region spans residues 406–537 (LGSSSEDEGD…SEADLPIPEL (132 aa)). Residues serine 408, serine 409, and serine 410 each carry the phosphoserine modification. Residues 415–427 (DSHSESGEDEAPK) are compositionally biased toward basic and acidic residues. 2 positions are modified to phosphoserine: serine 445 and serine 446. Threonine 452 and threonine 456 each carry phosphothreonine. Serine 460 and serine 484 each carry phosphoserine. Residue threonine 487 is modified to Phosphothreonine. Over residues 490–501 (ELRRVAKQREQR) the composition is skewed to basic and acidic residues. A Phosphoserine modification is found at serine 517. Threonine 518 and threonine 522 each carry phosphothreonine. Positions 536–627 (ELPDFFQGKH…KLLPHQLYGV (92 aa)) constitute a BRCT 2 domain.

Homodimer. Interacts with polynucleotide kinase (PNK), DNA polymerase-beta (POLB) and DNA ligase III (LIG3). Interacts with APTX and APLF. Interacts with APEX1; the interaction is induced by SIRT1 and increases with the acetylated form of APEX1. Interacts with (poly-ADP-ribosylated) PARP1. In terms of processing, phosphorylation of Ser-371 causes dimer dissociation. Phosphorylation by CK2 promotes interaction with APTX and APLF. Sumoylated.

It localises to the nucleus. The protein localises to the chromosome. In terms of biological role, scaffold protein involved in DNA single-strand break repair by mediating the assembly of DNA break repair protein complexes. Negatively regulates ADP-ribosyltransferase activity of PARP1 during base-excision repair in order to prevent excessive PARP1 activity. Recognizes and binds poly-ADP-ribose chains: specifically binds auto-poly-ADP-ribosylated PARP1, limiting its activity. The sequence is that of DNA repair protein XRCC1 (Xrcc1) from Rattus norvegicus (Rat).